The primary structure comprises 300 residues: 4-hydroxy-tetrahydrodipicolinate synthase (300 aa).

Position 45 (Thr-45) interacts with pyruvate. Tyr-140 serves as the catalytic Proton donor/acceptor. Catalysis depends on Lys-169, which acts as the Schiff-base intermediate with substrate. Ile-210 provides a ligand contact to pyruvate.

This sequence belongs to the DapA family. Homotetramer; dimer of dimers.

The protein localises to the cytoplasm. It carries out the reaction L-aspartate 4-semialdehyde + pyruvate = (2S,4S)-4-hydroxy-2,3,4,5-tetrahydrodipicolinate + H2O + H(+). Its pathway is amino-acid biosynthesis; L-lysine biosynthesis via DAP pathway; (S)-tetrahydrodipicolinate from L-aspartate: step 3/4. Its function is as follows. Catalyzes the condensation of (S)-aspartate-beta-semialdehyde [(S)-ASA] and pyruvate to 4-hydroxy-tetrahydrodipicolinate (HTPA). This is 4-hydroxy-tetrahydrodipicolinate synthase from Helicobacter pylori (strain J99 / ATCC 700824) (Campylobacter pylori J99).